A 1574-amino-acid polypeptide reads, in one-letter code: Pentafunctional AROM polypeptide (1574 aa).

The 3-dehydroquinate synthase stretch occupies residues 1-384 (MSCSNNTEPT…HEPRATTVED (384 aa)). Residues 49–51 (DTN), 85–88 (EISK), 116–118 (GGV), and Asp121 each bind NAD(+). Position 132 (Arg132) interacts with 7-phospho-2-dehydro-3-deoxy-D-arabino-heptonate. 141 to 142 (TT) lines the NAD(+) pocket. 7-phospho-2-dehydro-3-deoxy-D-arabino-heptonate is bound by residues Asp148 and Lys154. Lys163 is an NAD(+) binding site. Asn164 provides a ligand contact to 7-phospho-2-dehydro-3-deoxy-D-arabino-heptonate. Residues 181–184 (FLET) and Asn192 contribute to the NAD(+) site. Glu196 contacts Zn(2+). 7-phospho-2-dehydro-3-deoxy-D-arabino-heptonate-binding positions include 196-199 (EVIK) and Lys250. Residue Glu260 is the Proton acceptor; for 3-dehydroquinate synthase activity of the active site. 7-phospho-2-dehydro-3-deoxy-D-arabino-heptonate contacts are provided by residues 264 to 268 (RNLLN) and His271. Residue His271 participates in Zn(2+) binding. His275 functions as the Proton acceptor; for 3-dehydroquinate synthase activity in the catalytic mechanism. His287 and Lys356 together coordinate 7-phospho-2-dehydro-3-deoxy-D-arabino-heptonate. His287 contacts Zn(2+). The tract at residues 397–837 (ITPGVSTKLA…WDTLSQSFGL (441 aa)) is EPSP synthase. Cys819 acts as the For EPSP synthase activity in catalysis. The tract at residues 858–1052 (TRSVFIVGMR…TAKEQSFFVS (195 aa)) is shikimate kinase. 865–872 (GMRGAGKT) contributes to the ATP binding site. The interval 1053 to 1266 (LTVPSVDSAV…AAPGQLSAAE (214 aa)) is 3-dehydroquinase. The Proton acceptor; for 3-dehydroquinate dehydratase activity role is filled by His1169. Residue Lys1197 is the Schiff-base intermediate with substrate; for 3-dehydroquinate dehydratase activity of the active site. Residues 1279–1574 (AQSFHLFGKP…NGDEIPTSTD (296 aa)) are shikimate dehydrogenase.

This sequence in the N-terminal section; belongs to the sugar phosphate cyclases superfamily. Dehydroquinate synthase family. The protein in the 2nd section; belongs to the EPSP synthase family. It in the 3rd section; belongs to the shikimate kinase family. In the 4th section; belongs to the type-I 3-dehydroquinase family. This sequence in the C-terminal section; belongs to the shikimate dehydrogenase family. As to quaternary structure, homodimer. The cofactor is Zn(2+).

It localises to the cytoplasm. The catalysed reaction is 7-phospho-2-dehydro-3-deoxy-D-arabino-heptonate = 3-dehydroquinate + phosphate. It catalyses the reaction 3-dehydroquinate = 3-dehydroshikimate + H2O. It carries out the reaction shikimate + NADP(+) = 3-dehydroshikimate + NADPH + H(+). The enzyme catalyses shikimate + ATP = 3-phosphoshikimate + ADP + H(+). The catalysed reaction is 3-phosphoshikimate + phosphoenolpyruvate = 5-O-(1-carboxyvinyl)-3-phosphoshikimate + phosphate. Its pathway is metabolic intermediate biosynthesis; chorismate biosynthesis; chorismate from D-erythrose 4-phosphate and phosphoenolpyruvate: step 2/7. It functions in the pathway metabolic intermediate biosynthesis; chorismate biosynthesis; chorismate from D-erythrose 4-phosphate and phosphoenolpyruvate: step 3/7. The protein operates within metabolic intermediate biosynthesis; chorismate biosynthesis; chorismate from D-erythrose 4-phosphate and phosphoenolpyruvate: step 4/7. It participates in metabolic intermediate biosynthesis; chorismate biosynthesis; chorismate from D-erythrose 4-phosphate and phosphoenolpyruvate: step 5/7. Its pathway is metabolic intermediate biosynthesis; chorismate biosynthesis; chorismate from D-erythrose 4-phosphate and phosphoenolpyruvate: step 6/7. Functionally, the AROM polypeptide catalyzes 5 consecutive enzymatic reactions in prechorismate polyaromatic amino acid biosynthesis. In Verticillium alfalfae (strain VaMs.102 / ATCC MYA-4576 / FGSC 10136) (Verticillium wilt of alfalfa), this protein is Pentafunctional AROM polypeptide.